Reading from the N-terminus, the 441-residue chain is Deoxyguanosinetriphosphate triphosphohydrolase-like protein (441 aa).

Residues 1–27 (MTSSVWQERRHGEDKQRRNDHRSPYQR) form a disordered region. The segment covering 7-27 (QERRHGEDKQRRNDHRSPYQR) has biased composition (basic and acidic residues). An HD domain is found at 59–252 (RLTHSLEVSQ…MELADDIAYA (194 aa)).

It belongs to the dGTPase family. Type 2 subfamily.

The polypeptide is Deoxyguanosinetriphosphate triphosphohydrolase-like protein (Shewanella oneidensis (strain ATCC 700550 / JCM 31522 / CIP 106686 / LMG 19005 / NCIMB 14063 / MR-1)).